A 361-amino-acid polypeptide reads, in one-letter code: Transcription factor Sox-18B (361 aa).

The interval 17–65 (VNSTWVPPADTVPEASLTPHSPPAPDSPAPSPKPGYGYSACEEKPGDPR) is disordered. A compositionally biased stretch (pro residues) spans 36-49 (HSPPAPDSPAPSPK). The segment at residues 66 to 134 (IRRPMNAFMV…QHLQDHPNYK (69 aa)) is a DNA-binding region (HMG box). Interaction with DNA stretches follow at residues 68-81 (RPMN…KDER) and 92-104 (HNAV…GQSW). The disordered stretch occupies residues 127-163 (LQDHPNYKYRPRRKKQAKKLKRMDPSHHLRNEGYTGG). Over residues 133-147 (YKYRPRRKKQAKKLK) the composition is skewed to basic residues. An important for transcriptional activation region spans residues 147 to 208 (KRMDPSHHLR…VLEPSEPAFF (62 aa)). The span at 148 to 157 (RMDPSHHLRN) shows a compositional bias: basic and acidic residues. The Sox C-terminal domain occupies 234–360 (KTLREISLPY…TAMYYTPCIT (127 aa)). Positions 306-314 (NEFDQYLNM) match the 9aaTAD motif.

Expressed in the adult spleen, lung, heart and kidney, and at a lower level in the adult testis, liver and brain.

It localises to the nucleus. Transcription factor. Binds to the consensus DNA sequence 5'-AACAAT-3'. Also binds 5'-CACAAT-3' and 5'-AATAAT-3' but with a lower affinity. Acts partially redundantly with sox7 during cardiogenesis, acting indirectly through nodal-signaling to induce mesodermal, organizer and endodermal tissues, which then interact to initiate cardiogenesis. Also acts as an antagonist of beta-catenin signaling. The protein is Transcription factor Sox-18B (sox18-b) of Xenopus laevis (African clawed frog).